A 310-amino-acid chain; its full sequence is L-lactate dehydrogenase (310 aa).

Residues Val-17, Asp-38, Lys-43, Tyr-69, and 83–84 (GA) each bind NAD(+). Gln-86 and Arg-92 together coordinate substrate. NAD(+) is bound by residues Ser-105, 122-124 (ATN), and Ser-147. 124 to 127 (NPVD) contacts substrate. 152-155 (DTAR) is a binding site for substrate. Beta-D-fructose 1,6-bisphosphate contacts are provided by Arg-157 and His-172. His-179 (proton acceptor) is an active-site residue. Tyr-218 carries the phosphotyrosine modification. Position 227 (Thr-227) interacts with substrate.

The protein belongs to the LDH/MDH superfamily. LDH family. As to quaternary structure, homotetramer.

The protein localises to the cytoplasm. It carries out the reaction (S)-lactate + NAD(+) = pyruvate + NADH + H(+). It participates in fermentation; pyruvate fermentation to lactate; (S)-lactate from pyruvate: step 1/1. Its activity is regulated as follows. Allosterically activated by fructose 1,6-bisphosphate (FBP). Catalyzes the conversion of lactate to pyruvate. The chain is L-lactate dehydrogenase from Halalkalibacterium halodurans (strain ATCC BAA-125 / DSM 18197 / FERM 7344 / JCM 9153 / C-125) (Bacillus halodurans).